Reading from the N-terminus, the 226-residue chain is Staphylococcal superantigen-like 1 (226 aa).

The N-terminal stretch at 1 to 30 (MKFKAIAKASLALGMLATGVITSNVQSVQA) is a signal peptide.

The protein belongs to the staphylococcal/streptococcal toxin family. Homodimer.

It is found in the secreted. Mediates virulence by proteolytically cleaving host proteins, including collagens types I and IV as well as human cytokines IL8, IL17A, and IFN-gamma. The chain is Staphylococcal superantigen-like 1 from Staphylococcus aureus (strain NCTC 8325 / PS 47).